Here is a 216-residue protein sequence, read N- to C-terminus: Serine acetyltransferase (216 aa).

Belongs to the transferase hexapeptide repeat family.

It is found in the cytoplasm. It catalyses the reaction L-serine + acetyl-CoA = O-acetyl-L-serine + CoA. The protein operates within amino-acid biosynthesis; L-cysteine biosynthesis; L-cysteine from L-serine: step 1/2. The polypeptide is Serine acetyltransferase (cysE) (Staphylococcus xylosus).